Here is a 323-residue protein sequence, read N- to C-terminus: MTSYSLPFKSSGKEMAASGELAGKIGLLKKEMNAIVLAHYYTLPEIQQVADVVGDSLALARAAEKNSADVIVFAGVYFMAETAKIINPDKLVLMPDLYAGCPLADSCPVGEFRAFKQRHPDALVITYINSTAEIKSLSDITCTSSNAEHIIRQIPEERTIIFGPDRNLGGYIMKKLGREMLLWQGFCYVHEAFREACILQACRENPQAELIAHPECREEVLRHAAFIGSTQALLDYTVSAPASSFIVATEPGILYEMQRRSPKKQFIAAPKDPENPRSVCKQMKQNTLEKLYQCMLDRSPEIIVPDDLRVLALRPIKKMLEMS.

Positions 39 and 56 each coordinate iminosuccinate. Cysteine 101 is a binding site for [4Fe-4S] cluster. Iminosuccinate-binding positions include tyrosine 127–asparagine 129 and serine 144. Position 187 (cysteine 187) interacts with [4Fe-4S] cluster. Iminosuccinate contacts are provided by residues histidine 213–glutamate 215 and threonine 230. [4Fe-4S] cluster is bound at residue cysteine 280.

Belongs to the quinolinate synthase family. Type 2 subfamily. It depends on [4Fe-4S] cluster as a cofactor.

Its subcellular location is the cytoplasm. The catalysed reaction is iminosuccinate + dihydroxyacetone phosphate = quinolinate + phosphate + 2 H2O + H(+). The protein operates within cofactor biosynthesis; NAD(+) biosynthesis; quinolinate from iminoaspartate: step 1/1. In terms of biological role, catalyzes the condensation of iminoaspartate with dihydroxyacetone phosphate to form quinolinate. This Chlorobium phaeobacteroides (strain DSM 266 / SMG 266 / 2430) protein is Quinolinate synthase.